The primary structure comprises 248 residues: tRNA pseudouridine synthase A (248 aa).

Asp-53 (nucleophile) is an active-site residue. Residue Tyr-111 participates in substrate binding.

Belongs to the tRNA pseudouridine synthase TruA family. As to quaternary structure, homodimer.

It carries out the reaction uridine(38/39/40) in tRNA = pseudouridine(38/39/40) in tRNA. Formation of pseudouridine at positions 38, 39 and 40 in the anticodon stem and loop of transfer RNAs. In Streptococcus thermophilus (strain CNRZ 1066), this protein is tRNA pseudouridine synthase A.